The sequence spans 478 residues: Cytochrome c-552 (478 aa).

Residues 1–26 (MARKTLRARRFFSLIFPFFFITSVYA) form the signal peptide. His94 serves as a coordination point for heme c. Residues Cys122, Cys125, and Lys126 each contribute to the heme site. Positions 160, 163, 164, 209, 212, and 213 each coordinate heme c. Residues Glu215, Tyr216, Lys261, and Gln263 each contribute to the Ca(2+) site. A substrate-binding site is contributed by Tyr216. His264 contacts substrate. The heme c site is built by His275, Cys282, Cys285, His286, His301, Cys314, Cys317, His318, and His393.

This sequence belongs to the cytochrome c-552 family. It depends on Ca(2+) as a cofactor. Heme c serves as cofactor.

It localises to the periplasm. The enzyme catalyses 6 Fe(III)-[cytochrome c] + NH4(+) + 2 H2O = 6 Fe(II)-[cytochrome c] + nitrite + 8 H(+). The protein operates within nitrogen metabolism; nitrate reduction (assimilation). In terms of biological role, catalyzes the reduction of nitrite to ammonia, consuming six electrons in the process. The chain is Cytochrome c-552 from Salmonella typhi.